A 451-amino-acid chain; its full sequence is Trigger factor (451 aa).

A PPIase FKBP-type domain is found at 165-250 (DDKLTIDFEG…LHQIQAREAL (86 aa)).

The protein belongs to the FKBP-type PPIase family. Tig subfamily.

The protein resides in the cytoplasm. It catalyses the reaction [protein]-peptidylproline (omega=180) = [protein]-peptidylproline (omega=0). Involved in protein export. Acts as a chaperone by maintaining the newly synthesized protein in an open conformation. Functions as a peptidyl-prolyl cis-trans isomerase. In Helicobacter pylori (strain G27), this protein is Trigger factor.